Consider the following 63-residue polypeptide: Cecropin-B (63 aa).

Residues 1-22 (MNFAKILSFVFALVLALSMTSA) form the signal peptide. Positions 23–26 (APEP) are cleaved as a propeptide — removed by a dipeptidylpeptidase. A 5-hydroxylysine; partial modification is found at lysine 47. Isoleucine 61 is modified (isoleucine amide).

The protein belongs to the cecropin family. Post-translationally, lepidopteran-B differs from lepidopteran-A by its hydroxylated residue. In terms of tissue distribution, highest expression in fat body and hemocytes. Is also expressed in Malpighian tubules and to a much lesser extent in midgut. Not present in silk gland.

It is found in the secreted. In terms of biological role, cecropins have lytic and antibacterial activity against several Gram-positive and Gram-negative bacteria. The protein is Cecropin-B (CECB1) of Bombyx mori (Silk moth).